The following is a 51-amino-acid chain: MTIIESILSIATVQNNSNNNNNQKTPFANVYQLYNSTILFNNNQLTRKRIR.

This is an uncharacterized protein from Dictyostelium discoideum (Social amoeba).